A 242-amino-acid chain; its full sequence is DNA repair protein RecO (242 aa).

It belongs to the RecO family. In terms of assembly, monomer.

Functionally, involved in DNA repair and RecF pathway recombination. This chain is DNA repair protein RecO, found in Salmonella gallinarum (strain 287/91 / NCTC 13346).